The following is a 668-amino-acid chain: DNA ligase (668 aa).

NAD(+)-binding positions include 35–39 and 83–84; these read DKEYD and SL. K125 functions as the N6-AMP-lysine intermediate in the catalytic mechanism. 3 residues coordinate NAD(+): R147, E181, and K317. Positions 410, 413, 426, and 432 each coordinate Zn(2+). The 78-residue stretch at 591–668 folds into the BRCT domain; sequence KKDNKFNGKT…TEEEFNEMIN (78 aa).

The protein belongs to the NAD-dependent DNA ligase family. LigA subfamily. It depends on Mg(2+) as a cofactor. Mn(2+) is required as a cofactor.

It carries out the reaction NAD(+) + (deoxyribonucleotide)n-3'-hydroxyl + 5'-phospho-(deoxyribonucleotide)m = (deoxyribonucleotide)n+m + AMP + beta-nicotinamide D-nucleotide.. In terms of biological role, DNA ligase that catalyzes the formation of phosphodiester linkages between 5'-phosphoryl and 3'-hydroxyl groups in double-stranded DNA using NAD as a coenzyme and as the energy source for the reaction. It is essential for DNA replication and repair of damaged DNA. The protein is DNA ligase of Clostridium tetani (strain Massachusetts / E88).